The following is a 305-amino-acid chain: Ribonuclease BN (305 aa).

7 residues coordinate Zn(2+): His-64, His-66, Asp-68, His-69, His-141, Asp-212, and His-270. Asp-68 (proton acceptor) is an active-site residue.

This sequence belongs to the RNase Z family. RNase BN subfamily. As to quaternary structure, homodimer. Zn(2+) serves as cofactor.

In terms of biological role, zinc phosphodiesterase, which has both exoribonuclease and endoribonuclease activities. The chain is Ribonuclease BN from Salmonella gallinarum (strain 287/91 / NCTC 13346).